We begin with the raw amino-acid sequence, 255 residues long: Increased copper sensitivity protein 2 (255 aa).

The span at 1–12 (MGKFEQKERERI) shows a compositional bias: basic and acidic residues. Disordered stretches follow at residues 1-32 (MGKF…KSLG) and 82-142 (PGDK…RKSH). Positions 13–30 (STFSFPTTGSQSSTSIKS) are enriched in polar residues. The span at 131–142 (SGRRKSYHRKSH) shows a compositional bias: basic residues. Ser217 is subject to Phosphoserine.

The polypeptide is Increased copper sensitivity protein 2 (ICS2) (Saccharomyces cerevisiae (strain ATCC 204508 / S288c) (Baker's yeast)).